The primary structure comprises 562 residues: Dihydroxy-acid dehydratase (562 aa).

Residue D80 coordinates Mg(2+). C121 lines the [2Fe-2S] cluster pocket. Mg(2+)-binding residues include D122 and K123. The residue at position 123 (K123) is an N6-carboxylysine. C194 lines the [2Fe-2S] cluster pocket. E446 contacts Mg(2+). S472 (proton acceptor) is an active-site residue.

This sequence belongs to the IlvD/Edd family. As to quaternary structure, homodimer. [2Fe-2S] cluster serves as cofactor. Requires Mg(2+) as cofactor.

It carries out the reaction (2R)-2,3-dihydroxy-3-methylbutanoate = 3-methyl-2-oxobutanoate + H2O. The enzyme catalyses (2R,3R)-2,3-dihydroxy-3-methylpentanoate = (S)-3-methyl-2-oxopentanoate + H2O. The protein operates within amino-acid biosynthesis; L-isoleucine biosynthesis; L-isoleucine from 2-oxobutanoate: step 3/4. Its pathway is amino-acid biosynthesis; L-valine biosynthesis; L-valine from pyruvate: step 3/4. In terms of biological role, functions in the biosynthesis of branched-chain amino acids. Catalyzes the dehydration of (2R,3R)-2,3-dihydroxy-3-methylpentanoate (2,3-dihydroxy-3-methylvalerate) into 2-oxo-3-methylpentanoate (2-oxo-3-methylvalerate) and of (2R)-2,3-dihydroxy-3-methylbutanoate (2,3-dihydroxyisovalerate) into 2-oxo-3-methylbutanoate (2-oxoisovalerate), the penultimate precursor to L-isoleucine and L-valine, respectively. This chain is Dihydroxy-acid dehydratase, found in Staphylococcus aureus (strain Mu50 / ATCC 700699).